The primary structure comprises 138 residues: Transcription antitermination protein NusB (138 aa).

Belongs to the NusB family.

In terms of biological role, involved in transcription antitermination. Required for transcription of ribosomal RNA (rRNA) genes. Binds specifically to the boxA antiterminator sequence of the ribosomal RNA (rrn) operons. The sequence is that of Transcription antitermination protein NusB from Helicobacter pylori (strain J99 / ATCC 700824) (Campylobacter pylori J99).